Here is a 95-residue protein sequence, read N- to C-terminus: MSVTTKDVTYIAELAKLKFSDDEMLTMTSELNNILHYVEKLNEVDTEGVLPLSTIHDAVNVLREDVEHQPLSSTAVLLNAPDRQDRFFKVPKVIG.

It belongs to the GatC family. Heterotrimer of A, B and C subunits.

The enzyme catalyses L-glutamyl-tRNA(Gln) + L-glutamine + ATP + H2O = L-glutaminyl-tRNA(Gln) + L-glutamate + ADP + phosphate + H(+). The catalysed reaction is L-aspartyl-tRNA(Asn) + L-glutamine + ATP + H2O = L-asparaginyl-tRNA(Asn) + L-glutamate + ADP + phosphate + 2 H(+). Allows the formation of correctly charged Asn-tRNA(Asn) or Gln-tRNA(Gln) through the transamidation of misacylated Asp-tRNA(Asn) or Glu-tRNA(Gln) in organisms which lack either or both of asparaginyl-tRNA or glutaminyl-tRNA synthetases. The reaction takes place in the presence of glutamine and ATP through an activated phospho-Asp-tRNA(Asn) or phospho-Glu-tRNA(Gln). This chain is Aspartyl/glutamyl-tRNA(Asn/Gln) amidotransferase subunit C, found in Pelodictyon phaeoclathratiforme (strain DSM 5477 / BU-1).